A 271-amino-acid chain; its full sequence is Thiazole synthase (271 aa).

Catalysis depends on Lys95, which acts as the Schiff-base intermediate with DXP. Residues Gly156, 182–183 (AG), and 204–205 (NT) each bind 1-deoxy-D-xylulose 5-phosphate.

Belongs to the ThiG family. Homotetramer. Forms heterodimers with either ThiH or ThiS.

It localises to the cytoplasm. The catalysed reaction is [ThiS sulfur-carrier protein]-C-terminal-Gly-aminoethanethioate + 2-iminoacetate + 1-deoxy-D-xylulose 5-phosphate = [ThiS sulfur-carrier protein]-C-terminal Gly-Gly + 2-[(2R,5Z)-2-carboxy-4-methylthiazol-5(2H)-ylidene]ethyl phosphate + 2 H2O + H(+). It participates in cofactor biosynthesis; thiamine diphosphate biosynthesis. Its function is as follows. Catalyzes the rearrangement of 1-deoxy-D-xylulose 5-phosphate (DXP) to produce the thiazole phosphate moiety of thiamine. Sulfur is provided by the thiocarboxylate moiety of the carrier protein ThiS. In vitro, sulfur can be provided by H(2)S. In Shewanella amazonensis (strain ATCC BAA-1098 / SB2B), this protein is Thiazole synthase.